A 174-amino-acid chain; its full sequence is Nucleoside-triphosphatase THEP1 (174 aa).

ATP-binding positions include 7 to 14 and 94 to 101; these read GRPGVGKT and LIIVDEIG.

This sequence belongs to the THEP1 NTPase family.

The catalysed reaction is a ribonucleoside 5'-triphosphate + H2O = a ribonucleoside 5'-diphosphate + phosphate + H(+). In terms of biological role, has nucleotide phosphatase activity towards ATP, GTP, CTP, TTP and UTP. May hydrolyze nucleoside diphosphates with lower efficiency. The sequence is that of Nucleoside-triphosphatase THEP1 from Thermotoga maritima (strain ATCC 43589 / DSM 3109 / JCM 10099 / NBRC 100826 / MSB8).